A 149-amino-acid chain; its full sequence is Urease accessory protein UreE (149 aa).

It belongs to the UreE family.

It localises to the cytoplasm. Its function is as follows. Involved in urease metallocenter assembly. Binds nickel. Probably functions as a nickel donor during metallocenter assembly. This is Urease accessory protein UreE from Ruegeria pomeroyi (strain ATCC 700808 / DSM 15171 / DSS-3) (Silicibacter pomeroyi).